The chain runs to 415 residues: Gamma-glutamyl phosphate reductase (415 aa).

Belongs to the gamma-glutamyl phosphate reductase family.

It is found in the cytoplasm. It catalyses the reaction L-glutamate 5-semialdehyde + phosphate + NADP(+) = L-glutamyl 5-phosphate + NADPH + H(+). Its pathway is amino-acid biosynthesis; L-proline biosynthesis; L-glutamate 5-semialdehyde from L-glutamate: step 2/2. In terms of biological role, catalyzes the NADPH-dependent reduction of L-glutamate 5-phosphate into L-glutamate 5-semialdehyde and phosphate. The product spontaneously undergoes cyclization to form 1-pyrroline-5-carboxylate. This Bacillus cereus (strain ATCC 10987 / NRS 248) protein is Gamma-glutamyl phosphate reductase.